The following is a 436-amino-acid chain: Anhydro-N-acetylmuramic acid kinase (436 aa).

32 to 39 (GTSLDGMD) contributes to the ATP binding site.

This sequence belongs to the anhydro-N-acetylmuramic acid kinase family.

The enzyme catalyses 1,6-anhydro-N-acetyl-beta-muramate + ATP + H2O = N-acetyl-D-muramate 6-phosphate + ADP + H(+). The protein operates within amino-sugar metabolism; 1,6-anhydro-N-acetylmuramate degradation. Its pathway is cell wall biogenesis; peptidoglycan recycling. Its function is as follows. Catalyzes the specific phosphorylation of 1,6-anhydro-N-acetylmuramic acid (anhMurNAc) with the simultaneous cleavage of the 1,6-anhydro ring, generating MurNAc-6-P. Is required for the utilization of anhMurNAc either imported from the medium or derived from its own cell wall murein, and thus plays a role in cell wall recycling. In Psychrobacter arcticus (strain DSM 17307 / VKM B-2377 / 273-4), this protein is Anhydro-N-acetylmuramic acid kinase.